The primary structure comprises 838 residues: Probable beta-glucosidase I (838 aa).

N197 carries an N-linked (GlcNAc...) asparagine glycan. Residue D225 is part of the active site. A PA14 domain is found at 395–555 (DGKKGFKFRV…SQEELISKAA (161 aa)). N-linked (GlcNAc...) asparagine glycosylation occurs at N493.

Belongs to the glycosyl hydrolase 3 family.

The protein resides in the secreted. It carries out the reaction Hydrolysis of terminal, non-reducing beta-D-glucosyl residues with release of beta-D-glucose.. Its pathway is glycan metabolism; cellulose degradation. Beta-glucosidases are one of a number of cellulolytic enzymes involved in the degradation of cellulosic biomass. Catalyzes the last step releasing glucose from the inhibitory cellobiose. In Aspergillus fumigatus (strain ATCC MYA-4609 / CBS 101355 / FGSC A1100 / Af293) (Neosartorya fumigata), this protein is Probable beta-glucosidase I (bglI).